Consider the following 153-residue polypeptide: Large ribosomal subunit protein bL9 (153 aa).

The protein belongs to the bacterial ribosomal protein bL9 family.

Its function is as follows. Binds to the 23S rRNA. This chain is Large ribosomal subunit protein bL9, found in Blochmanniella pennsylvanica (strain BPEN).